Here is a 70-residue protein sequence, read N- to C-terminus: DNA-directed RNA polymerase subunit epsilon (70 aa).

The protein belongs to the RNA polymerase subunit epsilon family. As to quaternary structure, RNAP is composed of a core of 2 alpha, a beta and a beta' subunit. The core is associated with a delta subunit, and at least one of epsilon or omega. When a sigma factor is associated with the core the holoenzyme is formed, which can initiate transcription.

It carries out the reaction RNA(n) + a ribonucleoside 5'-triphosphate = RNA(n+1) + diphosphate. Its function is as follows. A non-essential component of RNA polymerase (RNAP). The protein is DNA-directed RNA polymerase subunit epsilon of Lacticaseibacillus casei (strain BL23) (Lactobacillus casei).